The following is a 455-amino-acid chain: MAPDILQAFMTEKTQNAPQSGKVGFISLGCPKALVDSERILTQLRLDGYDVVPTYDDADIVVVNTCGFIDAAKQESLDAIGEAISENGKVIVTGCMGVEADRIRETHPGVLAVSGPHAYEEVVGAVHQYVPPRKEHDPFLDLVPPQGVKLTPRHYAYLKISEGCNHRCTFCIIPSMRGDLVSRPIGDVMDEAKRLVDAGVKEILVISQDTSAYGVDIKYRTGFWQGRPVKTKMQALCEALGEMGVWVRLHYVYPYPHVDDIIPLMAEGKILPYLDIPFQHASPRVLKAMKRPAHDSKTLERIRKWREICPELTIRSTFIVGFPGETEEDFQYLLDWLDEAQLDRVGAFTYSAVEGAPANELEGAVPEEVKEKRLARFMAKQAEISAARLQAKIGRTIDVLIDEVDEEGAIGRSKADAPEIDGMVYLNDETELVPGQIVQAVVEHADEHDLWARLI.

The MTTase N-terminal domain occupies 21–131; it reads GKVGFISLGC…VVGAVHQYVP (111 aa). [4Fe-4S] cluster is bound by residues Cys30, Cys66, Cys95, Cys164, Cys168, and Cys171. In terms of domain architecture, Radical SAM core spans 150–387; it reads LTPRHYAYLK…MAKQAEISAA (238 aa). Residues 390–455 form the TRAM domain; sequence QAKIGRTIDV…DEHDLWARLI (66 aa).

The protein belongs to the methylthiotransferase family. RimO subfamily. [4Fe-4S] cluster serves as cofactor.

It is found in the cytoplasm. It carries out the reaction L-aspartate(89)-[ribosomal protein uS12]-hydrogen + (sulfur carrier)-SH + AH2 + 2 S-adenosyl-L-methionine = 3-methylsulfanyl-L-aspartate(89)-[ribosomal protein uS12]-hydrogen + (sulfur carrier)-H + 5'-deoxyadenosine + L-methionine + A + S-adenosyl-L-homocysteine + 2 H(+). Its function is as follows. Catalyzes the methylthiolation of an aspartic acid residue of ribosomal protein uS12. In Marinobacter nauticus (strain ATCC 700491 / DSM 11845 / VT8) (Marinobacter aquaeolei), this protein is Ribosomal protein uS12 methylthiotransferase RimO.